The chain runs to 262 residues: 3-deoxy-manno-octulosonate cytidylyltransferase (262 aa).

The protein belongs to the KdsB family.

The protein resides in the cytoplasm. The enzyme catalyses 3-deoxy-alpha-D-manno-oct-2-ulosonate + CTP = CMP-3-deoxy-beta-D-manno-octulosonate + diphosphate. It functions in the pathway nucleotide-sugar biosynthesis; CMP-3-deoxy-D-manno-octulosonate biosynthesis; CMP-3-deoxy-D-manno-octulosonate from 3-deoxy-D-manno-octulosonate and CTP: step 1/1. It participates in bacterial outer membrane biogenesis; lipopolysaccharide biosynthesis. In terms of biological role, activates KDO (a required 8-carbon sugar) for incorporation into bacterial lipopolysaccharide in Gram-negative bacteria. The polypeptide is 3-deoxy-manno-octulosonate cytidylyltransferase (Acidovorax sp. (strain JS42)).